A 402-amino-acid chain; its full sequence is CD2 homolog (402 aa).

The signal sequence occupies residues 1 to 16 (MIIIVIFLMCLKIVLN). At 17–204 (NIIIWSTLNQ…ILKYQNYLST (188 aa)) the chain is on the extracellular side. 18 N-linked (GlcNAc...) asparagine; by host glycosylation sites follow: N25, N37, N52, N55, N72, N77, N81, N89, N95, N108, N125, N137, N148, N153, N169, N177, N184, and N190. 2 cysteine pairs are disulfide-bonded: C126–C191 and C133–C174. The chain crosses the membrane as a helical span at residues 205–225 (LFYIIIFIVSGLIIGIFISII). Topologically, residues 226-402 (SVLSIRRKRK…ISLIHVDRII (177 aa)) are cytoplasmic. Residues 238-276 (VEEIESPPPSESNEEDISHDDTTSIHEPSPREPLLPKPY) are disordered. The span at 256 to 267 (HDDTTSIHEPSP) shows a compositional bias: basic and acidic residues. 11 consecutive repeat copies span residues 302 to 307 (KPCPPP), 308 to 313 (KPCPPP), 314 to 319 (KPCPPP), 320 to 325 (KPCPPP), 326 to 331 (KPCSPP), 332 to 337 (KPCRPP), 338 to 343 (KPCPPP), 344 to 349 (KPCPPP), 350 to 355 (KPCPPP), 356 to 361 (KPCPPS), and 362 to 367 (KPCPSP). Positions 302 to 367 (KPCPPPKPCP…CPPSKPCPSP (66 aa)) are 11 X 6 AA tandem repeats of K-P-C-[PRS]-[P]-[PS]. Pro residues predominate over residues 319-386 (PKPCPPPKPC…PSIPLLPNIP (68 aa)). The segment at 319 to 388 (PKPCPPPKPC…IPLLPNIPPL (70 aa)) is disordered.

The protein belongs to the asfivirus CD2 homolog protein family. In terms of assembly, both glycosylated and nonglycosylated forms interact (via C-terminus) with the host AP-1 complex. Post-translationally, cleaved into two fragments of 63 kDa and 26 kDa containing respectively the glycosylated N-terminus and the nonglycosylated C-terminus. A full-length 89-kDa glycosylated form also exists.

The protein localises to the host cell membrane. Its subcellular location is the virion membrane. It localises to the host Golgi apparatus. Its function is as follows. May play an immunosuppressive role by inhibiting lymphocyte proliferation and subsequently facilitating viral replication and generalization of infection. Responsible for viral hemadsorption, which may help viral spread. Increases virus replication in the tick vector at the step of virus uptake or replication in the tick gut. May play a role in the host Golgi reorganization to yield viral factories. May play a role in host cell penetration. The sequence is that of CD2 homolog from Ornithodoros (relapsing fever ticks).